A 65-amino-acid chain; its full sequence is Large ribosomal subunit protein bL35 (65 aa).

Basic residues-rich tracts occupy residues 1 to 15 and 26 to 44; these read MPKM…KRFT and QAFK…KRQL. Positions 1–65 are disordered; the sequence is MPKMKTKKSA…KSVRAMMPYA (65 aa).

It belongs to the bacterial ribosomal protein bL35 family.

This Ralstonia nicotianae (strain ATCC BAA-1114 / GMI1000) (Ralstonia solanacearum) protein is Large ribosomal subunit protein bL35.